Here is a 211-residue protein sequence, read N- to C-terminus: Small ribosomal subunit protein uS3 (211 aa).

The region spanning 38–106 (LRKFIKKAFY…NIELNIIEVK (69 aa)) is the KH type-2 domain.

This sequence belongs to the universal ribosomal protein uS3 family. Part of the 30S ribosomal subunit. Forms a tight complex with proteins S10 and S14.

Its function is as follows. Binds the lower part of the 30S subunit head. Binds mRNA in the 70S ribosome, positioning it for translation. In Ehrlichia canis (strain Jake), this protein is Small ribosomal subunit protein uS3.